The following is a 113-amino-acid chain: Protein S100-A9 (113 aa).

Alanine 2 carries the N-acetylalanine modification. EF-hand domains are found at residues 13 to 48 (ISTI…DLPN) and 55 to 90 (RNEN…LIFA). Histidine 21 contacts Zn(2+). Positions 24 and 29 each coordinate Ca(2+). Position 31 (aspartate 31) interacts with Zn(2+). Ca(2+)-binding residues include threonine 32, glutamate 37, aspartate 68, asparagine 70, aspartate 72, glutamine 74, and glutamate 79. Residues histidine 92 and histidine 96 each contribute to the Zn(2+) site. Histidine 107 carries the post-translational modification Pros-methylhistidine.

Homodimer. Preferentially exists as a heterodimer or heterotetramer with S100A8 known as calprotectin (S100A8/A9). S100A9 interacts with ATP2A2. S100A9 interacts with AGER, and with the heterodimeric complex formed by TLR4 and LY96 in the presence of calcium and/or zinc ions. S100A9 binds quinoline-3-carboxamides in the presence of calcium and/or zinc ions. S100A9 interacts with amyloid-beta protein 40. Calprotectin (S100A8/9) interacts with CEACAM3 and tubulin filaments in a calcium-dependent manner. Heterotetrameric calprotectin (S100A8/A9) interacts with ANXA6 and associates with tubulin filaments in activated monocytes. Calprotectin (S100A8/9) interacts with NCF2/P67PHOX, RAC1, RAC2, CYBA and CYBB. Calprotectin (S100A8/9) interacts with NOS2 to form the iNOS-S100A8/A9 transnitrosylase complex; induced by LDL(ox). Calprotectin (S100A8/9) interacts with CD69. Phosphorylated. Phosphorylation inhibits activation of tubulin polymerization. Post-translationally, methylation at His-107 by METTL9 reduces zinc-binding without affecting heterodimerization with S100A8. Highly expressed at sites of inflammation.

Its subcellular location is the secreted. It localises to the cytoplasm. It is found in the cytoskeleton. The protein localises to the cell membrane. Functionally, S100A9 is a calcium- and zinc-binding protein which plays a prominent role in the regulation of inflammatory processes and immune response. It can induce neutrophil chemotaxis, adhesion, can increase the bactericidal activity of neutrophils by promoting phagocytosis via activation of SYK, PI3K/AKT, and ERK1/2 and can induce degranulation of neutrophils by a MAPK-dependent mechanism. Predominantly found as calprotectin (S100A8/A9) which has a wide plethora of intra- and extracellular functions. The intracellular functions include: facilitating leukocyte arachidonic acid trafficking and metabolism, modulation of the tubulin-dependent cytoskeleton during migration of phagocytes and activation of the neutrophilic NADPH-oxidase. Also participates in regulatory T-cell differentiation together with CD69. Activates NADPH-oxidase by facilitating the enzyme complex assembly at the cell membrane, transferring arachidonic acid, an essential cofactor, to the enzyme complex and S100A8 contributes to the enzyme assembly by directly binding to NCF2/P67PHOX. The extracellular functions involve pro-inflammatory, antimicrobial, oxidant-scavenging and apoptosis-inducing activities. Its pro-inflammatory activity includes recruitment of leukocytes, promotion of cytokine and chemokine production, and regulation of leukocyte adhesion and migration. Acts as an alarmin or a danger associated molecular pattern (DAMP) molecule and stimulates innate immune cells via binding to pattern recognition receptors such as Toll-like receptor 4 (TLR4) and receptor for advanced glycation endproducts (AGER). Binding to TLR4 and AGER activates the MAP-kinase and NF-kappa-B signaling pathways resulting in the amplification of the pro-inflammatory cascade. Has antimicrobial activity towards bacteria and fungi and exerts its antimicrobial activity probably via chelation of Zn(2+) which is essential for microbial growth. Can induce cell death via autophagy and apoptosis and this occurs through the cross-talk of mitochondria and lysosomes via reactive oxygen species (ROS) and the process involves BNIP3. Can regulate neutrophil number and apoptosis by an anti-apoptotic effect; regulates cell survival via ITGAM/ITGB and TLR4 and a signaling mechanism involving MEK-ERK. Its role as an oxidant scavenger has a protective role in preventing exaggerated tissue damage by scavenging oxidants. The iNOS-S100A8/A9 transnitrosylase complex is proposed to direct selective inflammatory stimulus-dependent S-nitrosylation of multiple targets such as GAPDH, NXA5, EZR, MSN and VIM by recognizing a [IL]-x-C-x-x-[DE] motif. The polypeptide is Protein S100-A9 (S100a9) (Rattus norvegicus (Rat)).